Here is a 194-residue protein sequence, read N- to C-terminus: ATP-dependent Clp protease proteolytic subunit (194 aa).

The Nucleophile role is filled by serine 99. Histidine 124 is a catalytic residue.

Belongs to the peptidase S14 family. Fourteen ClpP subunits assemble into 2 heptameric rings which stack back to back to give a disk-like structure with a central cavity, resembling the structure of eukaryotic proteasomes.

It is found in the cytoplasm. It catalyses the reaction Hydrolysis of proteins to small peptides in the presence of ATP and magnesium. alpha-casein is the usual test substrate. In the absence of ATP, only oligopeptides shorter than five residues are hydrolyzed (such as succinyl-Leu-Tyr-|-NHMec, and Leu-Tyr-Leu-|-Tyr-Trp, in which cleavage of the -Tyr-|-Leu- and -Tyr-|-Trp bonds also occurs).. In terms of biological role, cleaves peptides in various proteins in a process that requires ATP hydrolysis. Has a chymotrypsin-like activity. Plays a major role in the degradation of misfolded proteins. This chain is ATP-dependent Clp protease proteolytic subunit, found in Borrelia garinii subsp. bavariensis (strain ATCC BAA-2496 / DSM 23469 / PBi) (Borreliella bavariensis).